The sequence spans 147 residues: Hemoglobin subunit beta-1 (147 aa).

The Globin domain occupies histidine 3–histidine 147. The heme b site is built by histidine 64 and histidine 93.

This sequence belongs to the globin family. In terms of assembly, hb1 is a heterotetramer of two alpha-1 chains and two beta-1 chains. As to expression, red blood cells.

In terms of biological role, involved in oxygen transport from gills to the various peripheral tissues. The sequence is that of Hemoglobin subunit beta-1 from Liparis tunicatus (Kelp snailfish).